The primary structure comprises 443 residues: ATP-dependent protease ATPase subunit HslU (443 aa).

Residues I18, 60–65, D256, E321, and R393 each bind ATP; that span reads GVGKTE.

This sequence belongs to the ClpX chaperone family. HslU subfamily. As to quaternary structure, a double ring-shaped homohexamer of HslV is capped on each side by a ring-shaped HslU homohexamer. The assembly of the HslU/HslV complex is dependent on binding of ATP.

It is found in the cytoplasm. Functionally, ATPase subunit of a proteasome-like degradation complex; this subunit has chaperone activity. The binding of ATP and its subsequent hydrolysis by HslU are essential for unfolding of protein substrates subsequently hydrolyzed by HslV. HslU recognizes the N-terminal part of its protein substrates and unfolds these before they are guided to HslV for hydrolysis. The polypeptide is ATP-dependent protease ATPase subunit HslU (Pectobacterium atrosepticum (strain SCRI 1043 / ATCC BAA-672) (Erwinia carotovora subsp. atroseptica)).